We begin with the raw amino-acid sequence, 456 residues long: Phospholipase A1 member A (456 aa).

An N-terminal signal peptide occupies residues 1–24; it reads MCPGLWGTCFWLWGSLLWLSIGRS. The active-site Nucleophile is the Ser166. Asp190 (charge relay system) is an active-site residue. Cys245 and Cys258 are disulfide-bonded. His260 serves as the catalytic Charge relay system. 2 disulfide bridges follow: Cys282–Cys293 and Cys296–Cys304. Asn365 is a glycosylation site (N-linked (GlcNAc...) asparagine).

This sequence belongs to the AB hydrolase superfamily. Lipase family.

The protein resides in the secreted. The catalysed reaction is a 1,2-diacyl-sn-glycero-3-phospho-L-serine + H2O = a 2-acyl-sn-glycero-3-phospho-L-serine + a fatty acid + H(+). It catalyses the reaction 1,2-di-(9Z)-octadecenoyl-sn-glycero-3-phospho-L-serine + H2O = 2-(9Z-octadecenoyl)-sn-glycero-3-phospho-L-serine + (9Z)-octadecenoate + H(+). It carries out the reaction 1-hexadecanoyl-2-(5Z,8Z,11Z,14Z-eicosatetraenoyl)-sn-glycero-3-phospho-L-serine + H2O = 2-(5Z,8Z,11Z,14Z)-eicosatetraenoyl-sn-glycero-3-phospho-L-serine + hexadecanoate + H(+). The enzyme catalyses a 1-acyl-sn-glycero-3-phospho-L-serine + H2O = sn-glycero-3-phospho-L-serine + a fatty acid + H(+). The catalysed reaction is 1-(9Z-octadecenoyl)-sn-glycero-3-phospho-L-serine + H2O = sn-glycero-3-phospho-L-serine + (9Z)-octadecenoate + H(+). In terms of biological role, hydrolyzes the ester bond of the acyl group attached at the sn-1 position of phosphatidylserines (phospholipase A1 activity) and 1-acyl-2-lysophosphatidylserines (lysophospholipase activity) in the pathway of phosphatidylserines acyl chain remodeling. Cleaves phosphatidylserines exposed on the outer leaflet of the plasma membrane of apoptotic cells producing 2-acyl-1-lysophosphatidylserines, which in turn enhance mast cell activation and histamine production. Has no activity toward other glycerophospholipids including phosphatidylcholines, phosphatidylethanolamines, phosphatidic acids or phosphatidylinositols, or glycerolipids such as triolein. The sequence is that of Phospholipase A1 member A from Rattus norvegicus (Rat).